The primary structure comprises 81 residues: Photosystem I iron-sulfur center (81 aa).

4Fe-4S ferredoxin-type domains lie at 1–31 (MSHT…MVPW) and 37–68 (GQIA…IRVY). Residues C11, C14, C17, C21, C48, C51, C54, and C58 each contribute to the [4Fe-4S] cluster site.

As to quaternary structure, the cyanobacterial PSI reaction center is composed of one copy each of PsaA,B,C,D,E,F,I,J,K,L,M and X, and forms trimeric complexes. Requires [4Fe-4S] cluster as cofactor.

It is found in the cellular thylakoid membrane. It catalyses the reaction reduced [plastocyanin] + hnu + oxidized [2Fe-2S]-[ferredoxin] = oxidized [plastocyanin] + reduced [2Fe-2S]-[ferredoxin]. Its function is as follows. Apoprotein for the two 4Fe-4S centers FA and FB of photosystem I (PSI); essential for photochemical activity. FB is the terminal electron acceptor of PSI, donating electrons to ferredoxin. The C-terminus interacts with PsaA/B/D and helps assemble the protein into the PSI complex. Required for binding of PsaD and PsaE to PSI. PSI is a plastocyanin/cytochrome c6-ferredoxin oxidoreductase, converting photonic excitation into a charge separation, which transfers an electron from the donor P700 chlorophyll pair to the spectroscopically characterized acceptors A0, A1, FX, FA and FB in turn. The polypeptide is Photosystem I iron-sulfur center (Acaryochloris marina (strain MBIC 11017)).